A 273-amino-acid chain; its full sequence is Epithelial sodium channel subunit beta (273 aa).

The Extracellular segment spans residues N1–N245. 5 cysteine pairs are disulfide-bonded: C92–C179, C117–C175, C121–C171, C130–C157, and C132–C146. Residues V246–E273 form a helical membrane-spanning segment.

Belongs to the amiloride-sensitive sodium channel (TC 1.A.6) family. SCNN1B subfamily. Component of the heterotrimeric epithelial sodium channel (ENaC) composed of an alpha/SCNN1A, a beta/SCNN1B and a gamma/SCNN1G subunit.

The protein localises to the apical cell membrane. It localises to the cytoplasmic vesicle membrane. The catalysed reaction is Na(+)(in) = Na(+)(out). Originally identified and characterized by its inhibition by the diuretic drug amiloride. In terms of biological role, this is one of the three pore-forming subunits of the heterotrimeric epithelial sodium channel (ENaC), a critical regulator of sodium balance and fluid homeostasis. ENaC operates in epithelial tissues, where it mediates the electrodiffusion of sodium ions from extracellular fluid through the apical membrane of cells, with water following osmotically. It plays a key role in maintaining sodium homeostasis through electrogenic sodium reabsorption in the kidneys. Additionally, ENaC is essential for airway surface liquid homeostasis, which is crucial for proper mucus clearance. The chain is Epithelial sodium channel subunit beta from Aquarana catesbeiana (American bullfrog).